We begin with the raw amino-acid sequence, 320 residues long: Olfactory receptor 2W1 (320 aa).

Residues 1–25 (MDQSNYSSLHGFILLGFSNHPKMEM) lie on the Extracellular side of the membrane. Residue Asn5 is glycosylated (N-linked (GlcNAc...) asparagine). A helical membrane pass occupies residues 26–49 (ILSGVVAIFYLITLVGNTAIILAS). The Cytoplasmic portion of the chain corresponds to 50-57 (LLDSQLHT). A helical transmembrane segment spans residues 58–79 (PMYFFLRNLSFLDLCFTTSIIP). At 80–100 (QMLVNLWGPDKTISYVGCIIQ) the chain is on the extracellular side. Cys97 and Cys189 are joined by a disulfide. Residues 101-120 (LYVYMWLGSVECLLLAVMSY) traverse the membrane as a helical segment. Residues 121 to 139 (DRFTAICKPLHYFVVMNPH) lie on the Cytoplasmic side of the membrane. A helical transmembrane segment spans residues 140 to 158 (LCLKMIIMIWSISLANSVV). Over 159–195 (LCTLTLNLPTCGNNILDHFLCELPALVKIACVDTTTV) the chain is Extracellular. Residues 196 to 219 (EMSVFALGIIIVLTPLILILISYG) traverse the membrane as a helical segment. The Cytoplasmic portion of the chain corresponds to 220–236 (YIAKAVLRTKSKASQRK). Residues 237–259 (AMNTCGSHLTVVSMFYGTIIYMY) traverse the membrane as a helical segment. Residues 260–272 (LQPGNRASKDQGK) are Extracellular-facing. The helical transmembrane segment at 273–292 (FLTLFYTVITPSLNPLIYTL) threads the bilayer. Residues 293–320 (RNKDMKDALKKLMRFHHKSTKIKRNCKS) are Cytoplasmic-facing.

This sequence belongs to the G-protein coupled receptor 1 family.

The protein localises to the cell membrane. Odorant receptor. The sequence is that of Olfactory receptor 2W1 (OR2W1) from Homo sapiens (Human).